Reading from the N-terminus, the 474-residue chain is Aspartyl protease family protein At5g10770 (474 aa).

An N-terminal signal peptide occupies residues 1–25 (MSINRNLLNIIIILCICLNLGCNDG). The region spanning 132–469 (YIVTVGLGTP…DGAGGRVGFA (338 aa)) is the Peptidase A1 domain. Active-site residues include Asp-150 and Asp-352. Cysteines 391 and 432 form a disulfide. The GPI-anchor amidated asparagine moiety is linked to residue Asn-443. The propeptide at 444–474 (AAIFGNVQQQTLEVVYDGAGGRVGFAPNGCS) is removed in mature form.

It belongs to the peptidase A1 family.

Its subcellular location is the cell membrane. In terms of biological role, probably not redundant with AED1 and not involved in restriction of salicylic acid (SA) or systemic acquired resistance (SAR) signaling. The protein is Aspartyl protease family protein At5g10770 of Arabidopsis thaliana (Mouse-ear cress).